Reading from the N-terminus, the 359-residue chain is uncharacterized protein (359 aa).

The 113-residue stretch at 163–275 folds into the PINc domain; the sequence is VVDTSCIIDG…SKVANLQKVQ (113 aa). 2 residues coordinate Mg(2+): D165 and D244. Positions 289 to 350 constitute a TRAM domain; that stretch reads IYLPGDSLEL…LQTSAGRMIF (62 aa).

This sequence belongs to the ycf81 family. It in the central section; belongs to the PINc/VapC protein family. Mg(2+) serves as cofactor.

In terms of biological role, an RNase. This is an uncharacterized protein from Synechocystis sp. (strain ATCC 27184 / PCC 6803 / Kazusa).